We begin with the raw amino-acid sequence, 505 residues long: Maturase K (505 aa).

This sequence belongs to the intron maturase 2 family. MatK subfamily.

The protein localises to the plastid. The protein resides in the chloroplast. In terms of biological role, usually encoded in the trnK tRNA gene intron. Probably assists in splicing its own and other chloroplast group II introns. The sequence is that of Maturase K from Barclaya longifolia (Orchid lily).